The primary structure comprises 188 residues: Ribosome-recycling factor (188 aa).

This sequence belongs to the RRF family.

The protein resides in the cytoplasm. Responsible for the release of ribosomes from messenger RNA at the termination of protein biosynthesis. May increase the efficiency of translation by recycling ribosomes from one round of translation to another. The polypeptide is Ribosome-recycling factor (Bradyrhizobium diazoefficiens (strain JCM 10833 / BCRC 13528 / IAM 13628 / NBRC 14792 / USDA 110)).